The chain runs to 429 residues: 3-phosphoshikimate 1-carboxyvinyltransferase (429 aa).

3-phosphoshikimate is bound by residues Lys-23, Ser-24, and Arg-28. Lys-23 is a binding site for phosphoenolpyruvate. The phosphoenolpyruvate site is built by Gly-97 and Arg-125. Residues Ser-170, Ser-171, Gln-172, Ser-198, Asp-314, Asn-338, and Lys-342 each contribute to the 3-phosphoshikimate site. Position 172 (Gln-172) interacts with phosphoenolpyruvate. Asp-314 acts as the Proton acceptor in catalysis. Positions 346, 388, and 413 each coordinate phosphoenolpyruvate.

It belongs to the EPSP synthase family. As to quaternary structure, monomer.

It is found in the cytoplasm. The enzyme catalyses 3-phosphoshikimate + phosphoenolpyruvate = 5-O-(1-carboxyvinyl)-3-phosphoshikimate + phosphate. It functions in the pathway metabolic intermediate biosynthesis; chorismate biosynthesis; chorismate from D-erythrose 4-phosphate and phosphoenolpyruvate: step 6/7. In terms of biological role, catalyzes the transfer of the enolpyruvyl moiety of phosphoenolpyruvate (PEP) to the 5-hydroxyl of shikimate-3-phosphate (S3P) to produce enolpyruvyl shikimate-3-phosphate and inorganic phosphate. The sequence is that of 3-phosphoshikimate 1-carboxyvinyltransferase from Pectobacterium carotovorum subsp. carotovorum (strain PC1).